Reading from the N-terminus, the 347-residue chain is WAT1-related protein At4g15540 (347 aa).

A run of 10 helical transmembrane segments spans residues 15–35 (VVPF…SILY), 47–67 (VFVF…SLIF), 73–93 (LPTA…LGLT), 108–128 (TLSS…AIFF), 139–159 (ATQA…VIVL), 178–198 (WIIG…WFIL), 210–230 (IAVV…VCLL), 243–263 (GFSL…GSVI), 276–296 (ISLF…IFLG), and 299–319 (LHLG…TVIW). The EamA 1 domain maps to 30–158 (GSSILYKAAT…VSISGALVIV (129 aa)). One can recognise an EamA 2 domain in the interval 216-317 (YNLCATLISG…VILSFGFYTV (102 aa)).

The protein belongs to the drug/metabolite transporter (DMT) superfamily. Plant drug/metabolite exporter (P-DME) (TC 2.A.7.4) family.

The protein resides in the membrane. The polypeptide is WAT1-related protein At4g15540 (Arabidopsis thaliana (Mouse-ear cress)).